The following is a 30-amino-acid chain: Brevinin-2Rj (30 aa).

Cys24 and Cys30 are disulfide-bonded.

In terms of tissue distribution, expressed by the skin glands.

The protein localises to the secreted. Functionally, antimicrobial peptide. This is Brevinin-2Rj from Pelophylax ridibundus (Marsh frog).